The sequence spans 360 residues: Cannabinoid receptor 2 (360 aa).

The Extracellular portion of the chain corresponds to 1–33 (MAGCRELELTNGSNGGLEFNPMKEYMILSDAQQ). Asparagine 11 carries N-linked (GlcNAc...) asparagine glycosylation. Residues 34 to 59 (IAVAVLCTLMGLLSALENVAVLYLIL) form a helical membrane-spanning segment. The Cytoplasmic segment spans residues 60-71 (SSQRLRRKPSYL). Residues 72-92 (FIGSLAGADFLASVIFACNFV) form a helical membrane-spanning segment. At 93-104 (IFHVFHGVDSRN) the chain is on the extracellular side. Residues 105–129 (IFLLKIGSVTMTFTASVGSLLLTAV) form a helical membrane-spanning segment. The Cytoplasmic portion of the chain corresponds to 130 to 149 (DRYLCLCYPPTYKALVTRGR). A helical membrane pass occupies residues 150–172 (ALVALGVMWVLSALISYLPLMGW). Over 173–188 (TCCPSPCSELFPLIPN) the chain is Extracellular. Residues 189 to 214 (DYLLGWLLFIAILFSGIIYTYGYVLW) traverse the membrane as a helical segment. The Cytoplasmic portion of the chain corresponds to 215 to 246 (KAHQHVASLAEHQDRQVPGIARMRLDVRLAKT). Residues 247-267 (LGLVMAVLLICWFPALALMGH) traverse the membrane as a helical segment. Topologically, residues 268 to 279 (SLVTTLSDKVKE) are extracellular. Residues 280–301 (AFAFCSMLCLVNSMINPIIYAL) traverse the membrane as a helical segment. Topologically, residues 302–360 (RSGEIRSAAQHCLTGWKKYLQGLGSEGKEEAPKSSVTETEAEVKTTTGPGSRTPGCSNC) are cytoplasmic. The segment at 327–360 (EGKEEAPKSSVTETEAEVKTTTGPGSRTPGCSNC) is disordered. Phosphoserine is present on residues serine 335 and serine 336. Threonine 338 bears the Phosphothreonine mark. Positions 349 to 360 (GPGSRTPGCSNC) are enriched in polar residues. Serine 352 carries the phosphoserine modification.

This sequence belongs to the G-protein coupled receptor 1 family. Post-translationally, constitutively phosphorylated on Ser-352; phosphorylation increases cell internalization and desensitizes the receptor. In terms of tissue distribution, expressed in spleen and brain by neurons and glial cells (at protein level). Expressed in lung, testis and thymus but not in heart, liver or kidney. Expressed in cerebellum, cortex and brainstem.

It is found in the cell membrane. The protein localises to the cell projection. The protein resides in the dendrite. Its subcellular location is the perikaryon. In terms of biological role, heterotrimeric G protein-coupled receptor for endocannabinoid 2-arachidonoylglycerol mediating inhibition of adenylate cyclase. May function in inflammatory response, nociceptive transmission and bone homeostasis. This is Cannabinoid receptor 2 (Cnr2) from Rattus norvegicus (Rat).